The sequence spans 590 residues: MAINLQKPDITELKPRITVFGVGGGGGNAVNNMITAGLQGVDFVVANTDAQALTMTKAERIIQMGVAVTEGLGAGSQPEVGRAAAEECIDEIIDHLQGTHMCFVTAGMGGGTGTGAAPIVAQAARNKGILTVGVVTKPFHFEGGRRMRIADQGISDLQKSVDTLIVIPNQNLFRIANDKTTFADAFAMADQVLYSGVACITDLMVKEGLINLDFADVRSVMREMGRAMMGTGEASGEGRAMAAAEAAIANPLLDETSMKGAQGLLISITGGRDLTLFEVDEAATRIREEVDPDANIILGATFDEELEGLIRVSVVATGIDRTAAEVAGRSADFRPVAPKPIVRPSAAVPAQPQPTVSLQPVPQPQPVQQPLQQQNVDHIALAIREAEMERELDIAARAQVAAPAPQPQPHLQEEAFRPQSKLFAGVAPTEAAPVMRPAQPAPRPVEMQAPVQPQMQAQPVQQEPTQVVRQQAEPVRMPKVEDFPPVVKAEMDYRTQPAPAHQEERGPMGLLNRITSSLGLREREATNVSSDMTAAAPSAASQQRRPLSPEASLYAPRRGQLDDHGRAAPQMRSHEDDQLEIPAFLRRQSS.

Residues 24–28 (GGGGN), 111–113 (GTG), glutamate 142, arginine 146, and aspartate 190 each bind GTP. Disordered stretches follow at residues 346–372 (AAVP…QPLQ) and 524–590 (EATN…RQSS). Positions 534 to 546 (AAAPSAASQQRRP) are enriched in low complexity. Basic and acidic residues predominate over residues 559–576 (GQLDDHGRAAPQMRSHED).

The protein belongs to the FtsZ family. In terms of assembly, homodimer. Polymerizes to form a dynamic ring structure in a strictly GTP-dependent manner. Interacts directly with several other division proteins.

Its subcellular location is the cytoplasm. Essential cell division protein that forms a contractile ring structure (Z ring) at the future cell division site. The regulation of the ring assembly controls the timing and the location of cell division. One of the functions of the FtsZ ring is to recruit other cell division proteins to the septum to produce a new cell wall between the dividing cells. Binds GTP and shows GTPase activity. This Rhizobium meliloti (strain 1021) (Ensifer meliloti) protein is Cell division protein FtsZ 1.